The primary structure comprises 197 residues: Segregation and condensation protein B (197 aa).

The protein belongs to the ScpB family. In terms of assembly, homodimer. Homodimerization may be required to stabilize the binding of ScpA to the Smc head domains. Component of a cohesin-like complex composed of ScpA, ScpB and the Smc homodimer, in which ScpA and ScpB bind to the head domain of Smc. The presence of the three proteins is required for the association of the complex with DNA.

The protein resides in the cytoplasm. Its function is as follows. Participates in chromosomal partition during cell division. May act via the formation of a condensin-like complex containing Smc and ScpA that pull DNA away from mid-cell into both cell halves. The polypeptide is Segregation and condensation protein B (Bacillus licheniformis (strain ATCC 14580 / DSM 13 / JCM 2505 / CCUG 7422 / NBRC 12200 / NCIMB 9375 / NCTC 10341 / NRRL NRS-1264 / Gibson 46)).